The primary structure comprises 575 residues: MSGDWVRPGQALIWVIWIFGAIIEGSVTEEPHRYTKLGWVQGKQATVLGRLEPVNVFLGIPFAAPPLGPLRFSKPQPPIPWDNLREATAYPNLCFQNLEWLFIYQNLLKVSYPILGMSEDCLYLNIYAPCHANNGSSLPVMVWIPGGGFETGSASIFDGSALAVYEDVLVVTIQYRLGIFGFFTTQNQHAPGNWAFWDQLAALLWVRENIKYFGGNPDSVTIFGNSAGAISISSLILSPLSADLFHRAIMQSGVAIIPSLKSSDNDLKHDLQVVANVCDCNVSDSKALLKCLREKSSLELMSLSQKAKSFTRVVDGSFFSEEPLELLSQKTLKIVPSIIGVNNQECGYILPVRDTPEILLGSNESTALTLIHTLLHIPTQHLYIVTKEYFHGKHSPTDIRDTLLDLFGDVFFVVPGLVTARYHRDSGGPVYFYEFQHRPHCFQNSRPAFVKADHTDEIRFVFGGPFLKGDVVMFEEATEEEKLLSRKMMKYWANFARSGDPNGADLPPWPVYDENEQYLELDVNISTGRRLKDQRVEFWTDTLPLILSASKALLSPTFSLILLSLLSPVLLSAAS.

The first 28 residues, 1-28 (MSGDWVRPGQALIWVIWIFGAIIEGSVT), serve as a signal peptide directing secretion. Cys-94 and Cys-121 are joined by a disulfide. Asn-134 carries N-linked (GlcNAc...) asparagine glycosylation. Ser-226 acts as the Acyl-ester intermediate in catalysis. The cysteines at positions 280 and 291 are disulfide-linked. Residue Asn-281 is glycosylated (N-linked (GlcNAc...) asparagine). Glu-345 functions as the Charge relay system in the catalytic mechanism. N-linked (GlcNAc...) asparagine glycosylation occurs at Asn-363. The active-site Charge relay system is His-454. N-linked (GlcNAc...) asparagine glycosylation occurs at Asn-524.

It belongs to the type-B carboxylesterase/lipase family. N-glycosylated.

The protein resides in the secreted. The catalysed reaction is a carboxylic ester + H2O = an alcohol + a carboxylate + H(+). Its function is as follows. Involved in the detoxification of xenobiotics and in the activation of ester and amide prodrugs. In Mus musculus (Mouse), this protein is Carboxylesterase 5A (Ces5a).